The sequence spans 388 residues: Fructose-bisphosphate aldolase, chloroplastic (388 aa).

The N-terminal 38 residues, 1–38, are a transit peptide targeting the chloroplast; that stretch reads MASATLLKSSFLPKKSEWGATRQAAAPKPVTVSMVVRA. Arginine 72 serves as a coordination point for substrate. Glutamate 215 (proton acceptor) is an active-site residue. The active-site Schiff-base intermediate with dihydroxyacetone-P is the lysine 257. Substrate contacts are provided by residues 299 to 301 and arginine 329; that span reads SGG.

It belongs to the class I fructose-bisphosphate aldolase family. In terms of assembly, homotetramer. As to expression, expressed in leaf mesophyll cells.

Its subcellular location is the plastid. The protein resides in the chloroplast. It is found in the plastoglobule. The enzyme catalyses beta-D-fructose 1,6-bisphosphate = D-glyceraldehyde 3-phosphate + dihydroxyacetone phosphate. Its pathway is carbohydrate degradation; glycolysis; D-glyceraldehyde 3-phosphate and glycerone phosphate from D-glucose: step 4/4. Plays a key role in glycolysis and gluconeogenesis. This is Fructose-bisphosphate aldolase, chloroplastic from Oryza sativa subsp. japonica (Rice).